Here is a 131-residue protein sequence, read N- to C-terminus: Small ribosomal subunit protein uS8 (131 aa).

This sequence belongs to the universal ribosomal protein uS8 family. Part of the 30S ribosomal subunit. Contacts proteins S5 and S12.

In terms of biological role, one of the primary rRNA binding proteins, it binds directly to 16S rRNA central domain where it helps coordinate assembly of the platform of the 30S subunit. The sequence is that of Small ribosomal subunit protein uS8 from Desulforudis audaxviator (strain MP104C).